A 534-amino-acid polypeptide reads, in one-letter code: Glucose-6-phosphate isomerase (534 aa).

Glu-356 acts as the Proton donor in catalysis. Residues His-387 and Lys-502 contribute to the active site.

Belongs to the GPI family.

The protein localises to the cytoplasm. The catalysed reaction is alpha-D-glucose 6-phosphate = beta-D-fructose 6-phosphate. The protein operates within carbohydrate biosynthesis; gluconeogenesis. It participates in carbohydrate degradation; glycolysis; D-glyceraldehyde 3-phosphate and glycerone phosphate from D-glucose: step 2/4. Catalyzes the reversible isomerization of glucose-6-phosphate to fructose-6-phosphate. The protein is Glucose-6-phosphate isomerase of Desulfotalea psychrophila (strain LSv54 / DSM 12343).